A 388-amino-acid chain; its full sequence is F-box protein At5g42460 (388 aa).

The F-box domain occupies 1-47 (MTIMSDLPRDLLAEILSRVPLTSLRAVRLTCKKWNDLSKDRSFLKKQ).

In Arabidopsis thaliana (Mouse-ear cress), this protein is F-box protein At5g42460.